A 263-amino-acid polypeptide reads, in one-letter code: MSKRLSIKEIDALLRQGDASIDETFLAMLKADERKGVQSALKRYERQLEKEKALWMEHEEMLAYEKDLWAKGYEHVAGLDEVGRGPLAGPVVTAAVILPKDVQLPGLTDSKKLAKETRESFYDRIKEVALAWSVAIVPVTVIDEVNIYQATKQGMMSAIDQLSVNPDALLLDAMNLPLSLPQQSLIKGDQKSLSIAASSVLAKVTRDRYMADLANRYPEYGFERHVGYGTEEHLAALNAHGITPEHRRSFRPVQETAATRQTS.

The 189-residue stretch at 74–262 (EHVAGLDEVG…VQETAATRQT (189 aa)) folds into the RNase H type-2 domain. Residues Asp-80, Glu-81, and Asp-172 each coordinate a divalent metal cation.

This sequence belongs to the RNase HII family. The cofactor is Mn(2+). Mg(2+) serves as cofactor.

It localises to the cytoplasm. The enzyme catalyses Endonucleolytic cleavage to 5'-phosphomonoester.. Its function is as follows. Endonuclease that specifically degrades the RNA of RNA-DNA hybrids. In Halalkalibacterium halodurans (strain ATCC BAA-125 / DSM 18197 / FERM 7344 / JCM 9153 / C-125) (Bacillus halodurans), this protein is Ribonuclease HII (rnhB).